A 1233-amino-acid chain; its full sequence is ATP-dependent helicase/nuclease subunit A (1233 aa).

Residues 3–474 form the UvrD-like helicase ATP-binding domain; the sequence is TKWTEEQKQA…ILLYKNFRSR (472 aa). ATP is bound at residue 24 to 31; sequence AAAGSGKT. A UvrD-like helicase C-terminal domain is found at 518–809; the sequence is VTGGAVELHL…RIMSIHKSKG (292 aa). A disordered region spans residues 533-555; sequence VEEEVEEKEEEKNEEKDFEEEEE.

Belongs to the helicase family. AddA subfamily. Heterodimer of AddA and AddB/RexB. The cofactor is Mg(2+).

The catalysed reaction is Couples ATP hydrolysis with the unwinding of duplex DNA by translocating in the 3'-5' direction.. It catalyses the reaction ATP + H2O = ADP + phosphate + H(+). Functionally, the heterodimer acts as both an ATP-dependent DNA helicase and an ATP-dependent, dual-direction single-stranded exonuclease. Recognizes the chi site generating a DNA molecule suitable for the initiation of homologous recombination. The AddA nuclease domain is required for chi fragment generation; this subunit has the helicase and 3' -&gt; 5' nuclease activities. The protein is ATP-dependent helicase/nuclease subunit A of Thermoanaerobacter pseudethanolicus (strain ATCC 33223 / 39E) (Clostridium thermohydrosulfuricum).